The chain runs to 103 residues: Histone H4 (103 aa).

The segment covering 1–14 has biased composition (gly residues); the sequence is MTGRGKGGKGLGKG. The disordered stretch occupies residues 1-20; it reads MTGRGKGGKGLGKGGAKRHR. Lys6 bears the N6-acetyl-N6-methyllysine; alternate mark. An N6-methyllysine; alternate mark is found at Lys6, Lys9, and Lys13. Position 13 is an N6-acetyl-N6-methyllysine; alternate (Lys13). The DNA-binding element occupies 17-21; it reads KRHRK. Lys92 bears the N6-glutaryllysine mark.

Belongs to the histone H4 family. The nucleosome is a histone octamer containing two molecules each of H2A, H2B, H3 and H4 assembled in one H3-H4 heterotetramer and two H2A-H2B heterodimers. The octamer wraps approximately 147 bp of DNA. Post-translationally, glutarylation at Lys-92 (H4K91glu) destabilizes nucleosomes by promoting dissociation of the H2A-H2B dimers from nucleosomes.

It localises to the nucleus. The protein localises to the chromosome. Functionally, core component of nucleosome. Nucleosomes wrap and compact DNA into chromatin, limiting DNA accessibility to the cellular machineries which require DNA as a template. Histones thereby play a central role in transcription regulation, DNA repair, DNA replication and chromosomal stability. DNA accessibility is regulated via a complex set of post-translational modifications of histones, also called histone code, and nucleosome remodeling. This Neurospora crassa (strain ATCC 24698 / 74-OR23-1A / CBS 708.71 / DSM 1257 / FGSC 987) protein is Histone H4 (hH4-1).